Here is a 60-residue protein sequence, read N- to C-terminus: Large ribosomal subunit protein uL30 (60 aa).

This sequence belongs to the universal ribosomal protein uL30 family. As to quaternary structure, part of the 50S ribosomal subunit.

The polypeptide is Large ribosomal subunit protein uL30 (Amoebophilus asiaticus (strain 5a2)).